We begin with the raw amino-acid sequence, 185 residues long: Phosphatidylglycerophosphatase GEP4, mitochondrial (185 aa).

The short motif at 45-49 (DKDNC) is the Phosphoryl acceptor element.

This sequence belongs to the GEP4 family.

It localises to the mitochondrion inner membrane. The catalysed reaction is a 1,2-diacyl-sn-glycero-3-phospho-(1'-sn-glycero-3'-phosphate) + H2O = a 1,2-diacyl-sn-glycero-3-phospho-(1'-sn-glycerol) + phosphate. It participates in phospholipid metabolism; phosphatidylglycerol biosynthesis; phosphatidylglycerol from CDP-diacylglycerol: step 2/2. Phosphatidylglycerophosphatase involved in the biosynthesis of cardiolipin (CL), a unique dimeric phosphoglycerolipid predominantly present in mitochondrial membranes and which has important functions for cellular energy metabolism, mitochondrial dynamics and the initiation of apoptotic pathways. Required for the stability of respiratory chain supercomplexes and for growth at elevated temperature, in presence of ethidium bromide or in absence of prohibitins. This is Phosphatidylglycerophosphatase GEP4, mitochondrial (GEP4) from Saccharomyces cerevisiae (strain ATCC 204508 / S288c) (Baker's yeast).